The chain runs to 102 residues: Alpha-hemoglobin-stabilizing protein (102 aa).

This sequence belongs to the AHSP family. Monomer. Forms a heterodimer with free alpha-hemoglobin. Does not bind beta-hemoglobin nor alpha(2)beta(2) hemoglobin A. As to expression, expressed in blood and bone marrow.

The protein resides in the cytoplasm. Functionally, acts as a chaperone to prevent the harmful aggregation of alpha-hemoglobin during normal erythroid cell development. Specifically protects free alpha-hemoglobin from precipitation. It is predicted to modulate pathological states of alpha-hemoglobin excess such as beta-thalassemia. This Homo sapiens (Human) protein is Alpha-hemoglobin-stabilizing protein (AHSP).